Consider the following 730-residue polypeptide: Elongation factor 2 (730 aa).

In terms of domain architecture, tr-type G spans 18-238; sequence DQIRNFGVIA…YSEGKVDELV (221 aa). GTP-binding positions include 27 to 34, 93 to 97, and 147 to 150; these read AHVDHGKT, DTPGH, and NKVD. Position 595 is a diphthamide (histidine 595). Residues 711–730 are disordered; sequence RKRKGLAPDPPTVSEFIDRE.

This sequence belongs to the TRAFAC class translation factor GTPase superfamily. Classic translation factor GTPase family. EF-G/EF-2 subfamily.

The protein localises to the cytoplasm. Catalyzes the GTP-dependent ribosomal translocation step during translation elongation. During this step, the ribosome changes from the pre-translocational (PRE) to the post-translocational (POST) state as the newly formed A-site-bound peptidyl-tRNA and P-site-bound deacylated tRNA move to the P and E sites, respectively. Catalyzes the coordinated movement of the two tRNA molecules, the mRNA and conformational changes in the ribosome. This is Elongation factor 2 from Cenarchaeum symbiosum (strain A).